The chain runs to 90 residues: Cell division protein CrgA (90 aa).

A disordered region spans residues 1–25 (MPKARVTKNETAPVSSNPSANRTPV). Residues 9-22 (NETAPVSSNPSANR) show a composition bias toward polar residues. 2 helical membrane-spanning segments follow: residues 38 to 58 (VIMF…YLVG) and 67 to 87 (LGAW…LMTM).

This sequence belongs to the CrgA family.

The protein localises to the cell membrane. In terms of biological role, involved in cell division. This is Cell division protein CrgA from Corynebacterium glutamicum (strain R).